We begin with the raw amino-acid sequence, 492 residues long: NAD(P)H-quinone oxidoreductase subunit 2 A, chloroplastic (492 aa).

13 consecutive transmembrane segments (helical) span residues 6 to 26, 39 to 59, 81 to 101, 106 to 126, 131 to 151, 165 to 185, 209 to 229, 277 to 297, 305 to 325, 336 to 356, 377 to 397, 400 to 420, and 464 to 484; these read LLLF…GLIL, ISWF…ALLF, IFQF…VEYI, MAIT…MFLC, LITI…LSGY, YLLM…WLYG, PGIL…LSPA, WHLL…LIAI, MLAY…IVGD, YMLF…SFGL, ALSL…AGFF, LHLF…IGLL, and FSMI…NPII.

It belongs to the complex I subunit 2 family. In terms of assembly, NDH is composed of at least 16 different subunits, 5 of which are encoded in the nucleus.

The protein localises to the plastid. It localises to the chloroplast thylakoid membrane. The catalysed reaction is a plastoquinone + NADH + (n+1) H(+)(in) = a plastoquinol + NAD(+) + n H(+)(out). It carries out the reaction a plastoquinone + NADPH + (n+1) H(+)(in) = a plastoquinol + NADP(+) + n H(+)(out). NDH shuttles electrons from NAD(P)H:plastoquinone, via FMN and iron-sulfur (Fe-S) centers, to quinones in the photosynthetic chain and possibly in a chloroplast respiratory chain. The immediate electron acceptor for the enzyme in this species is believed to be plastoquinone. Couples the redox reaction to proton translocation, and thus conserves the redox energy in a proton gradient. In Phaseolus vulgaris (Kidney bean), this protein is NAD(P)H-quinone oxidoreductase subunit 2 A, chloroplastic.